A 594-amino-acid chain; its full sequence is DELLA protein 1 (594 aa).

The disordered stretch occupies residues 1-36; that stretch reads MKREHQESFGGGVISNNNKTNTNHLNSSKNINFGEC. The segment covering 15–30 has biased composition (low complexity); that stretch reads SNNNKTNTNHLNSSKN. The DELLA motif motif lies at 61–65; that stretch reads DELLA. In terms of domain architecture, GRAS spans 207–587; sequence VDTQETGVRL…RSLIATSAWK (381 aa). The interval 214–268 is leucine repeat I (LRI); the sequence is VRLVHTLMACAEAIQQKNLKLAEALVKHISLLASLQTGAMRKVASYFAQALARRI. A required for possible homodimerization region spans residues 216 to 253; sequence LVHTLMACAEAIQQKNLKLAEALVKHISLLASLQTGAM. Positions 221 to 225 match the LxCxE motif; degenerate motif; it reads MACAE. The VHIID stretch occupies residues 285–350; it reads HMHFYESSPY…GGPPTFRLTG (66 aa). The VHIID signature appears at 316 to 320; the sequence is VHVID. Residues 364–396 form a leucine repeat II (LRII) region; the sequence is QVGWKLAQLAQTIGVQFEFRGFVCNSIADLDPN. Residues 406 to 508 form a PFYRE region; the sequence is VAVNSVFELH…EIYLGKQICN (103 aa). An LXXLL motif; degenerate motif is present at residues 414–418; that stretch reads LHTML. The segment at 511–587 is SAW; sequence AYEGVDRVER…RSLIATSAWK (77 aa).

It belongs to the GRAS family. DELLA subfamily. May be a homodimer. In terms of processing, ubiquitinated. Upon GA application it is ubiquitinated, leading to its subsequent degradation. Strongly expressed in the vascular tissue and endodermis but barely in the inner cortical cells where arbuscule are formed during arbuscular mycorrhizal (AM) symbiosis.

Its subcellular location is the nucleus. In terms of biological role, probable transcriptional regulator that acts as a repressor of the gibberellin (GA) signaling pathway. Probably acts by participating in large multiprotein complexes that repress transcription of GA-inducible genes. Upon GA application, it is degraded by the proteasome, allowing the GA signaling pathway. Together with DELLA2, required to enable arbuscule development during arbuscular mycorrhizal (AM) symbiosis with AM fungi (e.g. Glomus versiforme) via the regulation of RAM1 which, in turn, regulates various AM genes (e.g. NSP1, NSP2, PT4, LEC5, RAM2, EXO70I, STR and RAD1). The polypeptide is DELLA protein 1 (Medicago truncatula (Barrel medic)).